Consider the following 46-residue polypeptide: Defensin Tk-AMP-D6 (46 aa).

Disulfide bonds link Cys3/Cys46, Cys14/Cys34, Cys20/Cys40, and Cys24/Cys42.

Its function is as follows. Plant defense peptide. This Triticum kiharae (Wheat) protein is Defensin Tk-AMP-D6.